A 1157-amino-acid chain; its full sequence is Nitric oxide synthase, inducible (1157 aa).

Positions 23–27 (DINNN) match the DINNN-motif; mediates interaction with SPSB1, SPSB2 and SPSB4 motif. The tract at residues 29-64 (EKLRQASSSPVTQDDPKCPSRSRHRNECSQPLAETA) is disordered. Residues Cys-110 and Cys-115 each coordinate Zn(2+). A heme b-binding site is contributed by Cys-200. L-arginine-binding residues include Gln-263, Trp-372, Tyr-373, and Glu-377. Positions 381, 462, 463, and 476 each coordinate (6R)-L-erythro-5,6,7,8-tetrahydrobiopterin. Tyr-491 is a heme b binding site. A calmodulin-binding region spans residues 515–535 (FKVLVKAVLFAAVLMHKTMAA). Residues 539 to 677 (ATILFATETG…AFRGWAVQTF (139 aa)) form the Flavodoxin-like domain. Residues Thr-545, Glu-546, Thr-547, Arg-549, Ser-550, Ser-591, Thr-592, Ser-628, Cys-635, Glu-661, and Gln-665 each contribute to the FMN site. Positions 730-970 (KYVFSMRLKS…VRSASGFQLP (241 aa)) constitute an FAD-binding FR-type domain. Arg-750 contacts NADP(+). Residues His-772, Arg-906, Tyr-908, Ser-909, Thr-924, and Ala-926 each contribute to the FAD site. Thr-929 serves as a coordination point for NADP(+). 4 residues coordinate FAD: Tyr-930, Val-943, Cys-944, and Ser-945. Residues Thr-984, Arg-1017, Ser-1046, Arg-1047, Lys-1053, Tyr-1055, Gln-1057, and Asp-1090 each contribute to the NADP(+) site. Positions 1138-1157 (KEGAVGPPSDPRAPGAHGKS) are disordered.

It belongs to the NOS family. Homodimer. Interacts with NHERF1. Interacts with GAPDH; induced by oxidatively-modified low-densitity lipoprotein (LDL(ox)). Interacts with S100A8 and S100A9 to form the iNOS-S100A8/9 transnitrosylase complex. Interacts with SPSB1, SPSB2 and SPSB4. Interacts with ELOC and CUL5 in the presence of SPSB1 or SPSB2 or SPSB4. Forms a complex with ASL, ASS1 and HSP90AA1; the complex regulates cell-autonomous L-arginine synthesis and citrulline recycling while channeling extracellular L-arginine to nitric oxide synthesis pathway. It depends on heme b as a cofactor. Requires FAD as cofactor. FMN is required as a cofactor. The cofactor is (6R)-L-erythro-5,6,7,8-tetrahydrobiopterin. Polyubiquitinated; mediated by SPSB1, SPSB2 and SPSB4, leading to proteasomal degradation. Detected in both stimulated and unstimulated immune cells and macrophages with little or no up-regulation following cellular stimulation with lipopolysaccharides (LPS) or concanavalin A (ConA).

It is found in the cytoplasm. The protein resides in the cytosol. The catalysed reaction is 2 L-arginine + 3 NADPH + 4 O2 + H(+) = 2 L-citrulline + 2 nitric oxide + 3 NADP(+) + 4 H2O. With respect to regulation, not stimulated by calcium/calmodulin. Functionally, produces nitric oxide (NO) which is a messenger molecule with diverse functions throughout the body. In macrophages, NO mediates tumoricidal and bactericidal actions. Also has nitrosylase activity and mediates cysteine S-nitrosylation of cytoplasmic target proteins such PTGS2/COX2. As component of the iNOS-S100A8/9 transnitrosylase complex involved in the selective inflammatory stimulus-dependent S-nitrosylation of GAPDH implicated in regulation of the GAIT complex activity and probably multiple targets including ANXA5, EZR, MSN and VIM. Involved in inflammation, enhances the synthesis of pro-inflammatory mediators such as IL6 and IL8. This chain is Nitric oxide synthase, inducible (NOS2), found in Sus scrofa (Pig).